The chain runs to 773 residues: MLGRSLLALLPFVGLAFSQSASQFTDPTTGFQFTGITDPVHDVTYGFVFPPLATSGAQSTEFIGEVVAPIASKWIGIALGGAMNNDLLLVAWANGNQIVSSTRWATGYVQPTAYTGTATLTTLPETTINSTHWKWVFRCQGCTEWNNGGGIDVTSQGVLAWAFSNVAVDDPSDPQSTFSEHTDFGFFGIDYSTAHSANYQNYLNGDSGNPTTTSTKPTSTSSSVTTGPTVSATPYDYIIVGAGPGGIIAADRLSEAGKKVLLLERGGPSTKQTGGTYVAPWATSSGLTKFDIPGLFESLFTDSNPFWWCKDITVFAGCLVGGGTSVNGALYWYPNDGDFSSSVGWPSSWTNHAPYTSKLSSRLPSTDHPSTDGQRYLEQSFNVVSQLLKGQGYNQATINDNPNYKDHVFGYSAFDFLNGKRAGPVATYLQTALARPNFTFKTNVMVSNVVRNGSQILGVQTNDPTLGPNGFIPVTPKGRVILSAGAFGTSRILFQSGIGPTDMIQTVQSNPTAAAALPPQNQWINLPVGMNAQDNPSINLVFTHPSIDAYENWADVWSNPRPADAAQYLANQSGVFAGASPKLNFWRAYSGSDGFTRYAQGTVRPGAASVNSSLPYNASQIFTITVYLSTGIQSRGRIGIDAALRGTVLTPPWLVNPVDKTVLLQALHDVVSNIGSIPGLTMITPDVTQTLEEYVDAYDPATMNSNHWVSSTTIGSSPQSAVVDSNVKVFGTNNLFIVDAGIIPHLPTGNPQGTLMSAAEQAAAKILALAGGP.

Residues Met-1–Ser-18 form the signal peptide. Gln-19 is modified (pyrrolidone carboxylic acid). Residues Gln-19–Gly-208 are heme domain. 2 residues coordinate heme: Met-83 and His-181. Residues Leu-203–Gly-227 form a disordered region. The span at Pro-210–Gly-227 shows a compositional bias: low complexity. Positions Tyr-235–Pro-773 are oxidoreductase. Asp-236–Arg-265 is an FAD binding site. Catalysis depends on His-707, which acts as the Proton acceptor.

This sequence in the C-terminal section; belongs to the GMC oxidoreductase family. FAD serves as cofactor. Heme is required as a cofactor.

The protein localises to the secreted. The catalysed reaction is D-cellobiose + A = D-cellobiono-1,5-lactone + AH2. In terms of biological role, degrades both lignin and cellulose. Oxidizes cellobiose to cellobionolactone. This Phanerodontia chrysosporium (White-rot fungus) protein is Cellobiose dehydrogenase (CDH-1).